The primary structure comprises 904 residues: Toll-like receptor 3 (904 aa).

The signal sequence occupies residues 1-23 (MRQTLPCIYFWGGLLPFGMLCAS). In terms of domain architecture, LRRNT spans 24–51 (STTKCTVSHEVADCSHLKLTQVPDDLPT). Residues 24–704 (STTKCTVSHE…SCKDSAPFEL (681 aa)) lie on the Lumenal side of the membrane. A disulfide bridge connects residues cysteine 28 and cysteine 37. N-linked (GlcNAc...) asparagine glycosylation is found at asparagine 52, asparagine 57, and asparagine 70. LRR repeat units follow at residues 52-73 (NITVLNLTHNQLRRLPAANFTR), 76-97 (QLTSLDVGFNTISKLEPELCQK), 100-121 (MLKVLNLQHNELSQLSDKTFAF), 124-145 (NLTELHLMSNSIQKIKNNPFVK), 148-168 (NLITLDLSHNGLSSTKLGTQV), and 172-193 (NLQELLLSNNKIQALKSEELDI). A disulfide bridge connects residues cysteine 95 and cysteine 122. Asparagine 124 carries an N-linked (GlcNAc...) asparagine glycan. The N-linked (GlcNAc...) asparagine glycan is linked to asparagine 196. 2 LRR repeats span residues 198-219 (SLKKLELSSNQIKEFSPGCFHA) and 222-244 (RLFGLFLNNVQLGPSLTEKLCLE). N-linked (GlcNAc...) asparagine glycans are attached at residues asparagine 247, asparagine 252, asparagine 265, asparagine 275, and asparagine 291. LRR repeat units lie at residues 249 to 270 (SIRNLSLSNSQLSTTSNTTFLG), 275 to 296 (NLTMLDLSYNNLNVVGNDSFAW), 299 to 320 (QLEYFFLEYNNIQHLFSHSLHG), 323 to 344 (NVRYLNLKRSFTKQSISLASLP), 356 to 377 (CLEHLNMEDNDIPGIKSNMFTG), 380 to 400 (NLKYLSLSNSFTSLRTLTNET), 408 to 429 (PLHILNLTKNKISKIESDAFSW), 432 to 454 (HLEVLDLGLNEIGQELTGQEWRG), 465 to 486 (YNKYLQLTRNSFALVPSLQRLM), 507 to 528 (NLTILDLSNNNIANINDDMLEG), 531 to 552 (KLEILDLQHNNLARLWKHANPG), 563 to 584 (HLHILNLESNGFDEIPVEVFKD), 587 to 608 (ELKIIDLGLNNLNTLPASVFNN), and 611 to 632 (SLKSLNLQKNLITSVEKKVFGP). Residues asparagine 398 and asparagine 413 are each glycosylated (N-linked (GlcNAc...) asparagine). Asparagine 507 carries an N-linked (GlcNAc...) asparagine glycan. 2 N-linked (GlcNAc...) asparagine glycosylation sites follow: asparagine 636 and asparagine 662. An LRRCT domain is found at 645–698 (NPFDCTCESIAWFVNWINETHTNIPELSSHYLCNTPPHYHGFPVRLFDTSSCKD). 2 disulfide bridges follow: cysteine 649–cysteine 677 and cysteine 651–cysteine 696. A helical transmembrane segment spans residues 705-725 (FFMINTSILLIFIFIVLLIHF). The Cytoplasmic portion of the chain corresponds to 726–904 (EGWRISFYWN…VALGSKNSVH (179 aa)). A TIR domain is found at 754-897 (FEYAAYIIHA…AFRHKLQVAL (144 aa)). Tyrosine 759 carries the phosphotyrosine modification. Residues lysine 765, lysine 812, and lysine 831 each participate in a glycyl lysine isopeptide (Lys-Gly) (interchain with G-Cter in ubiquitin) cross-link. Phosphotyrosine is present on tyrosine 858.

This sequence belongs to the Toll-like receptor family. Monomer and homodimer; dimerization is triggered by ligand-binding, the signaling unit is composed of one ds-RNA of around 40 bp and two TLR3 molecules, and lateral clustering of signaling units along the length of the ds-RNA ligand is required for TLR3 signal transduction. Interacts (via transmembrane domain) with UNC93B1; the interaction is required for transport from the ER to the endosomes. Interacts with SRC; upon binding of double-stranded RNA. Interacts with TICAM1 (via the TIR domain) in response to poly(I:C) and this interaction is enhanced in the presence of WDFY1. The tyrosine-phosphorylated form (via TIR domain) interacts with WDFY1 (via WD repeat 2) in response to poly(I:C). In terms of processing, heavily N-glycosylated, except on that part of the surface of the ectodomain that is involved in ligand binding. Post-translationally, TLR3 signaling requires a proteolytic cleavage mediated by cathepsins CTSB and CTSH, the cleavage occurs between amino acids 252 and 346. The cleaved form of TLR3 is the predominant form found in endosomes. Ubiquitinated by TRIM3; leading to recognition and sorting of polyubiquitinated TLR3 by the ESCRT complexes. Ubiquitinated by ZNRF1 via 'Lys-63'-linked ubiquitin chains; leading to TLR3 lysosomal trafficking and degradation. Ubiquitinated by RNF170 at Lys-765 via 'Lys-48'-linked ubiquitin chains; leading to TLR3 proteasomal degradation. Expressed at high level in placenta and pancreas. Also detected in CD11c+ immature dendritic cells. Only expressed in dendritic cells and not in other leukocytes, including monocyte precursors. TLR3 is the TLR that is expressed most strongly in the brain, especially in astrocytes, glia, and neurons.

Its subcellular location is the endoplasmic reticulum membrane. It is found in the endosome membrane. The protein resides in the early endosome. Functionally, key component of innate and adaptive immunity. TLRs (Toll-like receptors) control host immune response against pathogens through recognition of molecular patterns specific to microorganisms. TLR3 is a nucleotide-sensing TLR which is activated by double-stranded RNA, a sign of viral infection. Acts via the adapter TRIF/TICAM1, leading to NF-kappa-B activation, IRF3 nuclear translocation, cytokine secretion and the inflammatory response. The chain is Toll-like receptor 3 from Homo sapiens (Human).